Consider the following 260-residue polypeptide: UPF0758 protein Smed_1459 (260 aa).

The MPN domain maps to 138–260 (VLSSWSAVID…HVSLKGLQLF (123 aa)). Residues His209, His211, and Asp222 each contribute to the Zn(2+) site. Residues 209 to 222 (HNHPSGDPTPSCAD) carry the JAMM motif motif.

Belongs to the UPF0758 family.

In Sinorhizobium medicae (strain WSM419) (Ensifer medicae), this protein is UPF0758 protein Smed_1459.